The chain runs to 109 residues: Anther-specific protein MZm3-3 (109 aa).

A signal peptide spans 1 to 41 (MTATTTTAAGGGKVQPRGLPVALSLLLLLVLAAGLGGGAEA). Intrachain disulfides connect Cys45–Cys86, Cys55–Cys75, Cys76–Cys101, and Cys88–Cys108.

Belongs to the A9/FIL1 family. Tapetum of anthers.

Its subcellular location is the secreted. This chain is Anther-specific protein MZm3-3, found in Zea mays (Maize).